The chain runs to 460 residues: Benzyl alcohol O-benzoyltransferase (460 aa).

Residues histidine 167 and aspartate 382 each act as proton acceptor in the active site.

Belongs to the plant acyltransferase family.

The catalysed reaction is benzyl alcohol + benzoyl-CoA = benzyl benzoate + CoA. Its function is as follows. Probably involved in the formation of volatile ester benzylbenzoate. The polypeptide is Benzyl alcohol O-benzoyltransferase (HSR201) (Nicotiana tabacum (Common tobacco)).